The primary structure comprises 385 residues: Protein pelota homolog (385 aa).

A Glycyl lysine isopeptide (Lys-Gly) (interchain with G-Cter in SUMO2) cross-link involves residue lysine 162. Phosphoserine is present on residues serine 374, serine 380, serine 381, and serine 382.

Belongs to the eukaryotic release factor 1 family. Pelota subfamily. As to quaternary structure, component of the Pelota-HBS1L complex, also named Dom34-Hbs1 complex, composed of PELO and HBS1L. Interacts with PINK1. Interacts with ABCE1. Interacts with CNOT4. A divalent metal cation is required as a cofactor.

Its subcellular location is the cytoplasm. Component of the Pelota-HBS1L complex, a complex that recognizes stalled ribosomes and triggers the No-Go Decay (NGD) pathway. In the Pelota-HBS1L complex, PELO recognizes ribosomes stalled at the 3' end of an mRNA and engages stalled ribosomes by destabilizing mRNA in the mRNA channel. Following mRNA extraction from stalled ribosomes by the SKI complex, the Pelota-HBS1L complex promotes recruitment of ABCE1, which drives the disassembly of stalled ribosomes, followed by degradation of damaged mRNAs as part of the NGD pathway. As part of the PINK1-regulated signaling, upon mitochondrial damage is recruited to the ribosome/mRNA-ribonucleoprotein complex associated to mitochondrial outer membrane thereby enabling the recruitment of autophagy receptors and induction of mitophagy. In Pongo abelii (Sumatran orangutan), this protein is Protein pelota homolog (PELO).